The following is a 1407-amino-acid chain: DNA-directed RNA polymerase subunit beta' (1407 aa).

Zn(2+)-binding residues include Cys-70, Cys-72, Cys-85, and Cys-88. Mg(2+)-binding residues include Asp-460, Asp-462, and Asp-464. Zn(2+) is bound by residues Cys-814, Cys-888, Cys-895, and Cys-898.

Belongs to the RNA polymerase beta' chain family. The RNAP catalytic core consists of 2 alpha, 1 beta, 1 beta' and 1 omega subunit. When a sigma factor is associated with the core the holoenzyme is formed, which can initiate transcription. It depends on Mg(2+) as a cofactor. Zn(2+) serves as cofactor.

The enzyme catalyses RNA(n) + a ribonucleoside 5'-triphosphate = RNA(n+1) + diphosphate. In terms of biological role, DNA-dependent RNA polymerase catalyzes the transcription of DNA into RNA using the four ribonucleoside triphosphates as substrates. The sequence is that of DNA-directed RNA polymerase subunit beta' from Erwinia tasmaniensis (strain DSM 17950 / CFBP 7177 / CIP 109463 / NCPPB 4357 / Et1/99).